A 452-amino-acid chain; its full sequence is Probable ECA polymerase (452 aa).

11 helical membrane passes run phenylalanine 6–phenylalanine 26, valine 37–leucine 57, valine 63–glycine 83, valine 118–leucine 138, glycine 155–leucine 175, alanine 181–glycine 201, isoleucine 207–tryptophan 227, methionine 228–tyrosine 248, leucine 341–isoleucine 361, tyrosine 378–valine 398, and valine 410–phenylalanine 430.

Belongs to the WzyE family. Probably part of a complex composed of WzxE, WzyE and WzzE.

The protein localises to the cell inner membrane. It functions in the pathway bacterial outer membrane biogenesis; enterobacterial common antigen biosynthesis. Functionally, probably involved in the polymerization of enterobacterial common antigen (ECA) trisaccharide repeat units. The polypeptide is Probable ECA polymerase (Salmonella gallinarum (strain 287/91 / NCTC 13346)).